A 356-amino-acid polypeptide reads, in one-letter code: Chaperone protein DnaJ (356 aa).

In terms of domain architecture, J spans Asp-5–Leu-69. The CR-type zinc-finger motif lies at Gly-121–His-197. The Zn(2+) site is built by Cys-134, Cys-137, Cys-151, Cys-154, Cys-171, Cys-174, Cys-185, and Cys-188. 4 CXXCXGXG motif repeats span residues Cys-134–Gly-141, Cys-151–Gly-158, Cys-171–Gly-178, and Cys-185–Gly-192.

This sequence belongs to the DnaJ family. Homodimer. It depends on Zn(2+) as a cofactor.

Its subcellular location is the cytoplasm. Its function is as follows. Participates actively in the response to hyperosmotic and heat shock by preventing the aggregation of stress-denatured proteins and by disaggregating proteins, also in an autonomous, DnaK-independent fashion. Unfolded proteins bind initially to DnaJ; upon interaction with the DnaJ-bound protein, DnaK hydrolyzes its bound ATP, resulting in the formation of a stable complex. GrpE releases ADP from DnaK; ATP binding to DnaK triggers the release of the substrate protein, thus completing the reaction cycle. Several rounds of ATP-dependent interactions between DnaJ, DnaK and GrpE are required for fully efficient folding. Also involved, together with DnaK and GrpE, in the DNA replication of plasmids through activation of initiation proteins. The sequence is that of Chaperone protein DnaJ from Hydrogenobacter thermophilus (strain DSM 6534 / IAM 12695 / TK-6).